The primary structure comprises 673 residues: MTDRFQLVSPYSPAGDQPAAIDKLVANFEAGLAKQTLLGVTGSGKTYTIANVVQQVQKPTLVMAPNKTLAAQLYGEFKSFFPHNAVEYFVSYYDYYQPEAYVPSSDTFIEKDSSINEHIEQMRLSATKTLLSRRDSLVVATVSAIYGLGAPEDYLSLRLILSIGEHIDQRQLIRHLTDLQYTRNEFELTRGAFRVRGEVLDVFPAESDTEALRIELFDGDIEQLTLFDPLTGETLRKLQRYTVYPKTHYATTRERTLSAVDTIKEELKERLEQLYSQSKLVEAQRLAQRTQFDLEMMAEVGFCNGIENYSRHLTGKAPGEPPPTLFDYLPPDALLVIDESHVTIPQIGAMYKGDRSRKETLVEFGFRLPSALDNRPLRFEEWEARSPRSIYVSATPGPYELRESAGEVTELVVRPTGLIDPVVEIRPVGMQVDDLMSEIHERIKLGDRVLVTTLTKRMAENLTEYLGEHGIRVRYLHSDIDTVERVEIIRDLRLGKFDVLVGINLLREGLDMPEVSLVAILDADKEGFLRSTGSLIQTIGRAARNLRGKAILYADKMTRSMQAAIDESDRRREKQVEYNLEHGITPESVERPISDIMEGAREDAAEKKSGKGRSKSRQVAEETPDYRAMKPAEIAGKLKSLEQKMYQHAKDLEFEAAAQIRDQIQKLKTASLA.

The 158-residue stretch at 26–183 (ANFEAGLAKQ…RHLTDLQYTR (158 aa)) folds into the Helicase ATP-binding domain. ATP is bound at residue 39–46 (GVTGSGKT). Positions 92-115 (YYDYYQPEAYVPSSDTFIEKDSSI) match the Beta-hairpin motif. The region spanning 431-597 (QVDDLMSEIH…SVERPISDIM (167 aa)) is the Helicase C-terminal domain. Residues 601–631 (REDAAEKKSGKGRSKSRQVAEETPDYRAMKP) form a disordered region. A compositionally biased stretch (basic and acidic residues) spans 618-630 (QVAEETPDYRAMK). The 36-residue stretch at 635 to 670 (AGKLKSLEQKMYQHAKDLEFEAAAQIRDQIQKLKTA) folds into the UVR domain.

The protein belongs to the UvrB family. As to quaternary structure, forms a heterotetramer with UvrA during the search for lesions. Interacts with UvrC in an incision complex.

Its subcellular location is the cytoplasm. In terms of biological role, the UvrABC repair system catalyzes the recognition and processing of DNA lesions. A damage recognition complex composed of 2 UvrA and 2 UvrB subunits scans DNA for abnormalities. Upon binding of the UvrA(2)B(2) complex to a putative damaged site, the DNA wraps around one UvrB monomer. DNA wrap is dependent on ATP binding by UvrB and probably causes local melting of the DNA helix, facilitating insertion of UvrB beta-hairpin between the DNA strands. Then UvrB probes one DNA strand for the presence of a lesion. If a lesion is found the UvrA subunits dissociate and the UvrB-DNA preincision complex is formed. This complex is subsequently bound by UvrC and the second UvrB is released. If no lesion is found, the DNA wraps around the other UvrB subunit that will check the other stand for damage. The chain is UvrABC system protein B from Xanthomonas oryzae pv. oryzae (strain MAFF 311018).